The chain runs to 152 residues: UPF0225 protein YchJ (152 aa).

It belongs to the UPF0225 family.

The chain is UPF0225 protein YchJ from Escherichia coli O127:H6 (strain E2348/69 / EPEC).